The chain runs to 301 residues: ATP synthase subunit gamma, mitochondrial (301 aa).

This sequence belongs to the ATPase gamma chain family. F-type ATPases have 2 components, CF(1) - the catalytic core - and CF(0) - the membrane proton channel. CF(1) has five subunits: alpha(3), beta(3), gamma(1), delta(1), epsilon(1). CF(0) has three main subunits: a, b and c.

It is found in the mitochondrion. The protein resides in the mitochondrion inner membrane. Its function is as follows. Mitochondrial membrane ATP synthase (F(1)F(0) ATP synthase or Complex V) produces ATP from ADP in the presence of a proton gradient across the membrane which is generated by electron transport complexes of the respiratory chain. F-type ATPases consist of two structural domains, F(1) - containing the extramembraneous catalytic core, and F(0) - containing the membrane proton channel, linked together by a central stalk and a peripheral stalk. During catalysis, ATP synthesis in the catalytic domain of F(1) is coupled via a rotary mechanism of the central stalk subunits to proton translocation. Part of the complex F(1) domain and the central stalk which is part of the complex rotary element. The gamma subunit protrudes into the catalytic domain formed of alpha(3)beta(3). Rotation of the central stalk against the surrounding alpha(3)beta(3) subunits leads to hydrolysis of ATP in three separate catalytic sites on the beta subunits. In Schizosaccharomyces pombe (strain 972 / ATCC 24843) (Fission yeast), this protein is ATP synthase subunit gamma, mitochondrial (atp3).